Consider the following 936-residue polypeptide: Protein translocase subunit SecA (936 aa).

ATP contacts are provided by residues Gln87, 105 to 109 (GEGKT), and Asp515. Cys920, Cys922, Cys931, and His932 together coordinate Zn(2+).

Belongs to the SecA family. Monomer and homodimer. Part of the essential Sec protein translocation apparatus which comprises SecA, SecYEG and auxiliary proteins SecDF-YajC and YidC. Requires Zn(2+) as cofactor.

The protein resides in the cell inner membrane. It is found in the cytoplasm. The catalysed reaction is ATP + H2O + cellular proteinSide 1 = ADP + phosphate + cellular proteinSide 2.. Functionally, part of the Sec protein translocase complex. Interacts with the SecYEG preprotein conducting channel. Has a central role in coupling the hydrolysis of ATP to the transfer of proteins into and across the cell membrane, serving both as a receptor for the preprotein-SecB complex and as an ATP-driven molecular motor driving the stepwise translocation of polypeptide chains across the membrane. The protein is Protein translocase subunit SecA of Paraburkholderia xenovorans (strain LB400).